A 389-amino-acid polypeptide reads, in one-letter code: uncharacterized protein (389 aa).

3 WD repeats span residues 11-53 (SFGS…QKIK), 146-186 (SHHD…EEDA), and 289-330 (AHGD…LDIP). The residue at position 351 (S351) is a Phosphoserine. The disordered stretch occupies residues 361–389 (QKESVSTRPRKEKHKKAKKHSMKSRFKPY). Residues 368-389 (RPRKEKHKKAKKHSMKSRFKPY) show a composition bias toward basic residues.

This is an uncharacterized protein from Saccharomyces cerevisiae (strain ATCC 204508 / S288c) (Baker's yeast).